Here is a 312-residue protein sequence, read N- to C-terminus: Dihydroorotate dehydrogenase B (NAD(+)), catalytic subunit (312 aa).

FMN is bound by residues Ser23 and 47-48 (KA). Residues Lys47 and 71-75 (NAIGL) contribute to the substrate site. Residues Asn103 and Asn131 each contribute to the FMN site. Residue Asn131 coordinates substrate. Cys134 (nucleophile) is an active-site residue. 2 residues coordinate FMN: Lys171 and Ile197. 198-199 (NT) is a binding site for substrate. Residues Gly223, 249-250 (GG), and 271-272 (GT) each bind FMN.

The protein belongs to the dihydroorotate dehydrogenase family. Type 1 subfamily. As to quaternary structure, heterotetramer of 2 PyrK and 2 PyrD type B subunits. Requires FMN as cofactor.

Its subcellular location is the cytoplasm. The enzyme catalyses (S)-dihydroorotate + NAD(+) = orotate + NADH + H(+). Its pathway is pyrimidine metabolism; UMP biosynthesis via de novo pathway; orotate from (S)-dihydroorotate (NAD(+) route): step 1/1. Functionally, catalyzes the conversion of dihydroorotate to orotate with NAD(+) as electron acceptor. In Streptococcus pneumoniae serotype 4 (strain ATCC BAA-334 / TIGR4), this protein is Dihydroorotate dehydrogenase B (NAD(+)), catalytic subunit (pyrDB).